The primary structure comprises 628 residues: tRNA uridine 5-carboxymethylaminomethyl modification enzyme MnmG (628 aa).

FAD is bound by residues 14 to 19, Val-126, and Ser-181; that span reads GAGHAG. Position 273 to 287 (273 to 287) interacts with NAD(+); that stretch reads GPRYCPSIEDKVVRF. Gln-370 provides a ligand contact to FAD.

It belongs to the MnmG family. As to quaternary structure, homodimer. Heterotetramer of two MnmE and two MnmG subunits. FAD serves as cofactor.

The protein resides in the cytoplasm. NAD-binding protein involved in the addition of a carboxymethylaminomethyl (cmnm) group at the wobble position (U34) of certain tRNAs, forming tRNA-cmnm(5)s(2)U34. The sequence is that of tRNA uridine 5-carboxymethylaminomethyl modification enzyme MnmG from Pelobacter propionicus (strain DSM 2379 / NBRC 103807 / OttBd1).